A 258-amino-acid chain; its full sequence is Ribosomal RNA small subunit methyltransferase A (258 aa).

The S-adenosyl-L-methionine site is built by H13, L15, G40, E61, D86, and N106.

The protein belongs to the class I-like SAM-binding methyltransferase superfamily. rRNA adenine N(6)-methyltransferase family. RsmA subfamily.

The protein resides in the cytoplasm. The enzyme catalyses adenosine(1518)/adenosine(1519) in 16S rRNA + 4 S-adenosyl-L-methionine = N(6)-dimethyladenosine(1518)/N(6)-dimethyladenosine(1519) in 16S rRNA + 4 S-adenosyl-L-homocysteine + 4 H(+). Specifically dimethylates two adjacent adenosines (A1518 and A1519) in the loop of a conserved hairpin near the 3'-end of 16S rRNA in the 30S particle. May play a critical role in biogenesis of 30S subunits. This Coxiella burnetii (strain CbuG_Q212) (Coxiella burnetii (strain Q212)) protein is Ribosomal RNA small subunit methyltransferase A.